The primary structure comprises 88 residues: Small ribosomal subunit protein bS16 (88 aa).

It belongs to the bacterial ribosomal protein bS16 family.

The protein is Small ribosomal subunit protein bS16 of Sorangium cellulosum (strain So ce56) (Polyangium cellulosum (strain So ce56)).